The primary structure comprises 155 residues: UPF0251 protein Paes_1249 (155 aa).

It belongs to the UPF0251 family.

This chain is UPF0251 protein Paes_1249, found in Prosthecochloris aestuarii (strain DSM 271 / SK 413).